The chain runs to 504 residues: Cytoplasmic dynein 1 light intermediate chain 1 (504 aa).

35–42 (GDPTSGKS) contacts ATP. Composition is skewed to low complexity over residues 167-189 (TTTAATTTTTTTSNNIENNTNKT), 392-425 (NSPSTPSPLSQSSNNNNSNNNINNTSTPSINTPL), and 437-446 (SSNNPVAASP). 3 disordered regions span residues 167 to 195 (TTTAATTTTTTTSNNIENNTNKTSPTTDK), 383 to 446 (LDND…AASP), and 464 to 504 (DKTS…QQKK). Residues 464–473 (DKTSSRKDLK) are compositionally biased toward basic and acidic residues. Residues 475-487 (SLASPPTTSVSSN) are compositionally biased toward polar residues. A compositionally biased stretch (basic and acidic residues) spans 488-504 (AREDAKKELDKLKQQKK).

The protein belongs to the dynein light intermediate chain family. In terms of assembly, homodimer. The cytoplasmic dynein 1 complex consists of two catalytic heavy chains (HCs) and a number of non-catalytic subunits presented by intermediate chains (ICs), light intermediate chains (LICs) and light chains (LCs).

It is found in the cytoplasm. It localises to the cytoskeleton. Functionally, acts as one of several non-catalytic accessory components of the cytoplasmic dynein 1 complex that are thought to be involved in linking dynein to cargos and to adapter proteins that regulate dynein function. Cytoplasmic dynein 1 acts as a motor for the intracellular retrograde motility of vesicles and organelles along microtubules. May play a role in binding dynein to membranous organelles or chromosomes. This is Cytoplasmic dynein 1 light intermediate chain 1 (dync1li1) from Dictyostelium discoideum (Social amoeba).